We begin with the raw amino-acid sequence, 242 residues long: 3-dehydroquinate dehydratase (242 aa).

Residues 39 to 41 (EVR) and Arg-73 each bind 3-dehydroquinate. Catalysis depends on His-135, which acts as the Proton donor/acceptor. The active-site Schiff-base intermediate with substrate is Lys-162. 3-dehydroquinate is bound by residues Arg-203 and Gln-228.

Belongs to the type-I 3-dehydroquinase family. In terms of assembly, homodimer.

The enzyme catalyses 3-dehydroquinate = 3-dehydroshikimate + H2O. It functions in the pathway metabolic intermediate biosynthesis; chorismate biosynthesis; chorismate from D-erythrose 4-phosphate and phosphoenolpyruvate: step 3/7. In terms of biological role, involved in the third step of the chorismate pathway, which leads to the biosynthesis of aromatic amino acids. Catalyzes the cis-dehydration of 3-dehydroquinate (DHQ) and introduces the first double bond of the aromatic ring to yield 3-dehydroshikimate. This is 3-dehydroquinate dehydratase from Methanosarcina acetivorans (strain ATCC 35395 / DSM 2834 / JCM 12185 / C2A).